Reading from the N-terminus, the 304-residue chain is Bacteriochlorophyll synthase 33 kDa chain (304 aa).

9 consecutive transmembrane segments (helical) span residues 26–46 (VTWF…NVPI), 51–71 (GVVV…SQAA), 94–114 (IPGL…LVVG), 117–137 (LGSW…AYSV), 151–171 (GLVG…VLLA), 178–198 (GFPI…IMTI), 227–247 (IACT…YLFS), 250–270 (YHAT…SVWM), and 279–299 (WYNG…AFAI).

The protein localises to the cell membrane. The protein operates within porphyrin-containing compound metabolism; bacteriochlorophyll biosynthesis (light-independent). Functionally, catalyzes the esterification of bacteriochlorophyllide a by geranylgeraniol-PPi. The sequence is that of Bacteriochlorophyll synthase 33 kDa chain (bchG) from Rhodobacter capsulatus (strain ATCC BAA-309 / NBRC 16581 / SB1003).